We begin with the raw amino-acid sequence, 249 residues long: Ribonuclease 3 (249 aa).

In terms of domain architecture, RNase III spans 21–149 (VDHQPLIDAL…LLGAIYLAHG (129 aa)). Position 62 (Glu62) interacts with Mg(2+). Asp66 is an active-site residue. Residues Asp135 and Glu138 each contribute to the Mg(2+) site. Glu138 is an active-site residue. In terms of domain architecture, DRBM spans 176–244 (DWKTTLQERL…AHKAVGFLQD (69 aa)).

It belongs to the ribonuclease III family. As to quaternary structure, homodimer. Requires Mg(2+) as cofactor.

It localises to the cytoplasm. The enzyme catalyses Endonucleolytic cleavage to 5'-phosphomonoester.. Functionally, digests double-stranded RNA. Involved in the processing of primary rRNA transcript to yield the immediate precursors to the large and small rRNAs (23S and 16S). Processes some mRNAs, and tRNAs when they are encoded in the rRNA operon. Processes pre-crRNA and tracrRNA of type II CRISPR loci if present in the organism. The protein is Ribonuclease 3 of Corynebacterium diphtheriae (strain ATCC 700971 / NCTC 13129 / Biotype gravis).